A 94-amino-acid chain; its full sequence is Small ubiquitin-related modifier 3 (94 aa).

A Glycyl lysine isopeptide (Lys-Gly) (interchain with G-Cter in SUMO) cross-link involves residue Lys11. Positions 15-92 (DHINLKVAGQ…IDVFQQQTGG (78 aa)) constitute a Ubiquitin-like domain. A Glycyl lysine isopeptide (Gly-Lys) (interchain with K-? in acceptor proteins) cross-link involves residue Gly92. Positions 93 to 94 (VC) are excised as a propeptide.

It belongs to the ubiquitin family. SUMO subfamily. Interacts with sae2 and ube2i. Covalently attached to a number of proteins. Post-translationally, polymeric chains can be formed through Lys-11 cross-linking. In terms of processing, cleavage of precursor form by a sentrin-specific protease is necessary for function.

It localises to the cytoplasm. The protein resides in the nucleus. It is found in the PML body. Its function is as follows. Ubiquitin-like protein which can be covalently attached to target lysines either as a monomer or as a lysine-linked polymer. Does not seem to be involved in protein degradation and may function as an antagonist of ubiquitin in the degradation process. Plays a role in a number of cellular processes such as nuclear transport, DNA replication and repair, mitosis and signal transduction. Covalent attachment to its substrates requires prior activation by the E1 complex sae1-sae2 and linkage to the E2 enzyme ube2i. The chain is Small ubiquitin-related modifier 3 (sumo3) from Xenopus laevis (African clawed frog).